Here is a 188-residue protein sequence, read N- to C-terminus: dTTP/UTP pyrophosphatase (188 aa).

D67 functions as the Proton acceptor in the catalytic mechanism.

The protein belongs to the Maf family. YhdE subfamily. A divalent metal cation is required as a cofactor.

The protein localises to the cytoplasm. The catalysed reaction is dTTP + H2O = dTMP + diphosphate + H(+). The enzyme catalyses UTP + H2O = UMP + diphosphate + H(+). Its function is as follows. Nucleoside triphosphate pyrophosphatase that hydrolyzes dTTP and UTP. May have a dual role in cell division arrest and in preventing the incorporation of modified nucleotides into cellular nucleic acids. This chain is dTTP/UTP pyrophosphatase, found in Thermococcus kodakarensis (strain ATCC BAA-918 / JCM 12380 / KOD1) (Pyrococcus kodakaraensis (strain KOD1)).